Here is a 233-residue protein sequence, read N- to C-terminus: Pyridoxal phosphate homeostasis protein (233 aa).

K36 is subject to N6-(pyridoxal phosphate)lysine.

This sequence belongs to the pyridoxal phosphate-binding protein YggS/PROSC family.

Functionally, pyridoxal 5'-phosphate (PLP)-binding protein, which is involved in PLP homeostasis. This is Pyridoxal phosphate homeostasis protein from Vibrio alginolyticus.